A 235-amino-acid polypeptide reads, in one-letter code: Probable deoxycytidine kinase FPV151 (235 aa).

30 to 38 (GNISAGKST) provides a ligand contact to ATP. The substrate site is built by Glu-53, Tyr-68, and Gln-79. The Proton acceptor role is filled by Glu-104. Positions 105, 110, and 172 each coordinate substrate.

This sequence belongs to the DCK/DGK family.

The enzyme catalyses 2'-deoxycytidine + a ribonucleoside 5'-triphosphate = dCMP + a ribonucleoside 5'-diphosphate + H(+). This is Probable deoxycytidine kinase FPV151 from Vertebrata (FPV).